A 172-amino-acid polypeptide reads, in one-letter code: Large ribosomal subunit protein uL10 (172 aa).

Belongs to the universal ribosomal protein uL10 family. As to quaternary structure, part of the ribosomal stalk of the 50S ribosomal subunit. The N-terminus interacts with L11 and the large rRNA to form the base of the stalk. The C-terminus forms an elongated spine to which L12 dimers bind in a sequential fashion forming a multimeric L10(L12)X complex.

Functionally, forms part of the ribosomal stalk, playing a central role in the interaction of the ribosome with GTP-bound translation factors. The polypeptide is Large ribosomal subunit protein uL10 (Ruegeria sp. (strain TM1040) (Silicibacter sp.)).